A 388-amino-acid chain; its full sequence is 4-hydroxy-3-methylbut-2-en-1-yl diphosphate synthase (flavodoxin) (388 aa).

Residues C281, C284, C316, and E323 each contribute to the [4Fe-4S] cluster site.

Belongs to the IspG family. It depends on [4Fe-4S] cluster as a cofactor.

It carries out the reaction (2E)-4-hydroxy-3-methylbut-2-enyl diphosphate + oxidized [flavodoxin] + H2O + 2 H(+) = 2-C-methyl-D-erythritol 2,4-cyclic diphosphate + reduced [flavodoxin]. It functions in the pathway isoprenoid biosynthesis; isopentenyl diphosphate biosynthesis via DXP pathway; isopentenyl diphosphate from 1-deoxy-D-xylulose 5-phosphate: step 5/6. In terms of biological role, converts 2C-methyl-D-erythritol 2,4-cyclodiphosphate (ME-2,4cPP) into 1-hydroxy-2-methyl-2-(E)-butenyl 4-diphosphate. The protein is 4-hydroxy-3-methylbut-2-en-1-yl diphosphate synthase (flavodoxin) of Pseudarthrobacter chlorophenolicus (strain ATCC 700700 / DSM 12829 / CIP 107037 / JCM 12360 / KCTC 9906 / NCIMB 13794 / A6) (Arthrobacter chlorophenolicus).